Reading from the N-terminus, the 391-residue chain is Matrix metalloproteinase-23 (391 aa).

The Cytoplasmic portion of the chain corresponds to 1–19; that stretch reads MGWRACLRPEASGAVQGRW. The propeptide occupies 1–79; the sequence is MGWRACLRPE…LSMLVTRRRR (79 aa). The helical; Signal-anchor for type II membrane protein transmembrane segment at 20 to 38 threads the bilayer; that stretch reads LGAVLSGLCLLSALAFLEW. Residues 39-391 lie on the Lumenal side of the membrane; the sequence is LGSPTETAWN…TYSWRVRVRS (353 aa). 2 N-linked (GlcNAc...) asparagine glycosylation sites follow: asparagine 93 and asparagine 149. Histidine 212 serves as a coordination point for Zn(2+). Residue glutamate 213 is part of the active site. The Zn(2+) site is built by histidine 216 and histidine 222. A glycan (N-linked (GlcNAc...) asparagine) is linked at asparagine 233. The 35-residue stretch at 256–290 folds into the ShKT domain; sequence CLDRIFVCTSWARKGFCDVRQRLMKRLCPRSCDFC. Intrachain disulfides connect cysteine 256/cysteine 290, cysteine 263/cysteine 283, and cysteine 272/cysteine 287. The 86-residue stretch at 296 to 381 folds into the Ig-like C2-type domain; that stretch reads PTVATTTSPT…VVRHRQRVLT (86 aa). Asparagine 317 carries N-linked (GlcNAc...) asparagine glycosylation. The cysteines at positions 322 and 371 are disulfide-linked.

Belongs to the peptidase M10A family. It depends on Zn(2+) as a cofactor. N-glycosylated. In terms of processing, proteolytic cleavage might yield an active form. As to expression, expressed at the highest levels in ovary and uterus. In ovary expression is strictly confined to granulosa cells of preantral and small antral follicles. Detected also in testis and prostate.

It localises to the membrane. It is found in the endoplasmic reticulum membrane. Inhibited by TIMP2. Functionally, protease. May regulate the surface expression of some potassium channels by retaining them in the endoplasmic reticulum. This is Matrix metalloproteinase-23 (Mmp23) from Rattus norvegicus (Rat).